Reading from the N-terminus, the 218-residue chain is Kappa-scoloptoxin(11)-Ssd1b (218 aa).

The N-terminal stretch at 1–16 is a signal peptide; the sequence is MFYSHLLFFTFTFACS. Positions 17-25 are excised as a propeptide; that stretch reads SSLNRKTKR.

Post-translationally, contains 8 disulfide bonds. In terms of tissue distribution, expressed by the venom gland.

The protein resides in the secreted. Voltage-gated potassium channel inhibitor. The chain is Kappa-scoloptoxin(11)-Ssd1b from Scolopendra dehaani (Thai centipede).